Here is a 660-residue protein sequence, read N- to C-terminus: Bifunctional polymyxin resistance protein ArnA (660 aa).

A formyltransferase ArnAFT region spans residues 1–304 (MKTVVFAYHD…TLGLVQGSRL (304 aa)). Position 86 to 88 (86 to 88 (HLI)) interacts with (6R)-10-formyltetrahydrofolate. The active-site Proton donor; for formyltransferase activity is the H104. (6R)-10-formyltetrahydrofolate contacts are provided by residues R114 and 136–140 (VKRAD). A dehydrogenase ArnADH region spans residues 314-660 (RRTRVLILGV…RTVDLTDKPS (347 aa)). Residues D347 and 368–369 (DI) contribute to the NAD(+) site. UDP-alpha-D-glucuronate contacts are provided by residues A393, Y398, and 432-433 (TS). E434 acts as the Proton acceptor; for decarboxylase activity in catalysis. UDP-alpha-D-glucuronate contacts are provided by residues R460, N492, 526-535 (KLIDGGKQKR), and Y613. Catalysis depends on R619, which acts as the Proton donor; for decarboxylase activity.

The protein in the N-terminal section; belongs to the Fmt family. UDP-L-Ara4N formyltransferase subfamily. This sequence in the C-terminal section; belongs to the NAD(P)-dependent epimerase/dehydratase family. UDP-glucuronic acid decarboxylase subfamily. Homohexamer, formed by a dimer of trimers.

It carries out the reaction UDP-alpha-D-glucuronate + NAD(+) = UDP-beta-L-threo-pentopyranos-4-ulose + CO2 + NADH. It catalyses the reaction UDP-4-amino-4-deoxy-beta-L-arabinose + (6R)-10-formyltetrahydrofolate = UDP-4-deoxy-4-formamido-beta-L-arabinose + (6S)-5,6,7,8-tetrahydrofolate + H(+). It participates in nucleotide-sugar biosynthesis; UDP-4-deoxy-4-formamido-beta-L-arabinose biosynthesis; UDP-4-deoxy-4-formamido-beta-L-arabinose from UDP-alpha-D-glucuronate: step 1/3. It functions in the pathway nucleotide-sugar biosynthesis; UDP-4-deoxy-4-formamido-beta-L-arabinose biosynthesis; UDP-4-deoxy-4-formamido-beta-L-arabinose from UDP-alpha-D-glucuronate: step 3/3. Its pathway is bacterial outer membrane biogenesis; lipopolysaccharide biosynthesis. Functionally, bifunctional enzyme that catalyzes the oxidative decarboxylation of UDP-glucuronic acid (UDP-GlcUA) to UDP-4-keto-arabinose (UDP-Ara4O) and the addition of a formyl group to UDP-4-amino-4-deoxy-L-arabinose (UDP-L-Ara4N) to form UDP-L-4-formamido-arabinose (UDP-L-Ara4FN). The modified arabinose is attached to lipid A and is required for resistance to polymyxin and cationic antimicrobial peptides. The chain is Bifunctional polymyxin resistance protein ArnA from Escherichia coli O17:K52:H18 (strain UMN026 / ExPEC).